The chain runs to 237 residues: Purine nucleoside phosphorylase DeoD-type (237 aa).

His4 contacts a purine D-ribonucleoside. Phosphate contacts are provided by residues Gly20, Arg24, Arg43, and 87-90 (RVGT). Residues 180 to 182 (EME) and 204 to 205 (SD) contribute to the a purine D-ribonucleoside site. Asp205 (proton donor) is an active-site residue.

This sequence belongs to the PNP/UDP phosphorylase family. As to quaternary structure, homohexamer; trimer of homodimers.

It carries out the reaction a purine D-ribonucleoside + phosphate = a purine nucleobase + alpha-D-ribose 1-phosphate. The enzyme catalyses a purine 2'-deoxy-D-ribonucleoside + phosphate = a purine nucleobase + 2-deoxy-alpha-D-ribose 1-phosphate. Its function is as follows. Catalyzes the reversible phosphorolytic breakdown of the N-glycosidic bond in the beta-(deoxy)ribonucleoside molecules, with the formation of the corresponding free purine bases and pentose-1-phosphate. This chain is Purine nucleoside phosphorylase DeoD-type, found in Streptococcus suis (strain 98HAH33).